Consider the following 335-residue polypeptide: Erlin-2-A (335 aa).

The Cytoplasmic segment spans residues 1-2 (MS). A helical membrane pass occupies residues 3–23 (HAGAIVGLGVALIAAALFSAI). Residues 24-335 (HKIEEGHVGV…GLDEAASAEE (312 aa)) lie on the Lumenal side of the membrane. N-linked (GlcNAc...) asparagine glycosylation is present at Asn106.

The protein belongs to the band 7/mec-2 family.

The protein localises to the endoplasmic reticulum membrane. Mediates the endoplasmic reticulum-associated degradation (ERAD) of inositol 1,4,5-trisphosphate receptors (IP3Rs). Promotes sterol-accelerated ERAD of HMGCR. Involved in regulation of cellular cholesterol homeostasis by regulation the SREBP signaling pathway. The polypeptide is Erlin-2-A (erlin2-a) (Xenopus laevis (African clawed frog)).